The primary structure comprises 359 residues: WAT1-related protein At4g28040 (359 aa).

A run of 10 helical transmembrane segments spans residues 10–30, 37–57, 66–86, 103–123, 133–153, 170–190, 204–224, 240–260, 266–286, and 292–312; these read LALVMLQFTSAGVALFTKAAF, TVFVVYRQAIATLFICPISFI, PSLGVRGFWWVALTAVIGVTV, ACAMTNLIPAVTFIISIIVGF, SVAKVIGTGVCVGGAMAMTFL, WLLGCFFLLISTFAWSLWLIL, TSACTCFIATIASFLVALALG, SCCIYSGFQLAISFFLQAWIV, VFSALFNPLSAVIVTFFGALY, and YLGSLLGALAIILGLYIVLWG. Residues 18 to 131 enclose the EamA 1 domain; it reads TSAGVALFTK…GFESIKRRSM (114 aa). The EamA 2 domain occupies 199–310; sequence PDHLYTSACT…AIILGLYIVL (112 aa).

This sequence belongs to the drug/metabolite transporter (DMT) superfamily. Plant drug/metabolite exporter (P-DME) (TC 2.A.7.4) family.

It localises to the membrane. The sequence is that of WAT1-related protein At4g28040 from Arabidopsis thaliana (Mouse-ear cress).